Here is a 602-residue protein sequence, read N- to C-terminus: ATP-dependent lipid A-core flippase (602 aa).

Transmembrane regions (helical) follow at residues 28 to 48 (VGIF…QPML), 84 to 104 (LLII…NYFL), 158 to 178 (IKVV…LLWM), 180 to 200 (WHLT…VSIA), and 268 to 288 (PMLQ…VLFL). The ABC transmembrane type-1 domain occupies 32–323 (LLSIVGFVIF…LSEVSSTIQK (292 aa)). One can recognise an ABC transporter domain in the interval 355–591 (LEVRNLSFTY…NGHYARLHAM (237 aa)). 389-396 (GRSGSGKS) is a binding site for ATP.

This sequence belongs to the ABC transporter superfamily. Lipid exporter (TC 3.A.1.106) family. Homodimer.

The protein localises to the cell inner membrane. The catalysed reaction is ATP + H2O + lipid A-core oligosaccharideSide 1 = ADP + phosphate + lipid A-core oligosaccharideSide 2.. Its function is as follows. Involved in lipopolysaccharide (LPS) biosynthesis. Translocates lipid A-core from the inner to the outer leaflet of the inner membrane. Transmembrane domains (TMD) form a pore in the inner membrane and the ATP-binding domain (NBD) is responsible for energy generation. In Pseudomonas putida (strain ATCC 47054 / DSM 6125 / CFBP 8728 / NCIMB 11950 / KT2440), this protein is ATP-dependent lipid A-core flippase.